The chain runs to 649 residues: Acetyl-coenzyme A synthetase (649 aa).

CoA contacts are provided by residues 191–194 (RGGR), threonine 311, and asparagine 335. ATP contacts are provided by residues 387-389 (GEP), 411-416 (DTWWQT), aspartate 500, and arginine 515. Serine 523 serves as a coordination point for CoA. Arginine 526 is a binding site for ATP. Positions 537, 539, and 542 each coordinate Mg(2+). A CoA-binding site is contributed by arginine 584. Position 609 is an N6-acetyllysine (lysine 609).

Belongs to the ATP-dependent AMP-binding enzyme family. The cofactor is Mg(2+). Acetylated. Deacetylation by the SIR2-homolog deacetylase activates the enzyme.

It catalyses the reaction acetate + ATP + CoA = acetyl-CoA + AMP + diphosphate. Functionally, catalyzes the conversion of acetate into acetyl-CoA (AcCoA), an essential intermediate at the junction of anabolic and catabolic pathways. AcsA undergoes a two-step reaction. In the first half reaction, AcsA combines acetate with ATP to form acetyl-adenylate (AcAMP) intermediate. In the second half reaction, it can then transfer the acetyl group from AcAMP to the sulfhydryl group of CoA, forming the product AcCoA. The polypeptide is Acetyl-coenzyme A synthetase (Psychromonas ingrahamii (strain DSM 17664 / CCUG 51855 / 37)).